Here is a 265-residue protein sequence, read N- to C-terminus: Aliphatic sulfonates import ATP-binding protein SsuB 1 (265 aa).

The ABC transporter domain occupies 31–255; the sequence is FAFKGVEKRF…RRGSAELARL (225 aa). Residue 63–70 coordinates ATP; the sequence is GKSGCGKS.

This sequence belongs to the ABC transporter superfamily. Aliphatic sulfonates importer (TC 3.A.1.17.2) family. As to quaternary structure, the complex is composed of two ATP-binding proteins (SsuB), two transmembrane proteins (SsuC) and a solute-binding protein (SsuA).

Its subcellular location is the cell inner membrane. The enzyme catalyses ATP + H2O + aliphatic sulfonate-[sulfonate-binding protein]Side 1 = ADP + phosphate + aliphatic sulfonateSide 2 + [sulfonate-binding protein]Side 1.. In terms of biological role, part of the ABC transporter complex SsuABC involved in aliphatic sulfonates import. Responsible for energy coupling to the transport system. In Mesorhizobium japonicum (strain LMG 29417 / CECT 9101 / MAFF 303099) (Mesorhizobium loti (strain MAFF 303099)), this protein is Aliphatic sulfonates import ATP-binding protein SsuB 1.